The sequence spans 519 residues: Probable U3 small nucleolar RNA-associated protein 18 (519 aa).

WD repeat units follow at residues 26 to 66 (DKEN…MFDT), 71 to 111 (GAKD…RLMI), 216 to 254 (SHSG…NPLV), 259 to 298 (LRSS…VQKV), 306 to 345 (NFQP…FATS), 347 to 386 (KIEG…VVRR), 390 to 429 (QDGV…ADAA), 438 to 479 (NITF…VFRN), and 485 to 519 (TPLG…AHYD).

The protein belongs to the WD repeat UTP18 family. Component of the ribosomal small subunit (SSU) processome.

The protein localises to the nucleus. The protein resides in the nucleolus. Functionally, involved in nucleolar processing of pre-18S ribosomal RNA. This chain is Probable U3 small nucleolar RNA-associated protein 18, found in Schizosaccharomyces pombe (strain 972 / ATCC 24843) (Fission yeast).